A 211-amino-acid polypeptide reads, in one-letter code: ATP-dependent Clp protease proteolytic subunit 1 (211 aa).

Residue Ser107 is the Nucleophile of the active site. Residue His132 is part of the active site.

Belongs to the peptidase S14 family. Fourteen ClpP subunits assemble into 2 heptameric rings which stack back to back to give a disk-like structure with a central cavity, resembling the structure of eukaryotic proteasomes.

Its subcellular location is the cytoplasm. It catalyses the reaction Hydrolysis of proteins to small peptides in the presence of ATP and magnesium. alpha-casein is the usual test substrate. In the absence of ATP, only oligopeptides shorter than five residues are hydrolyzed (such as succinyl-Leu-Tyr-|-NHMec, and Leu-Tyr-Leu-|-Tyr-Trp, in which cleavage of the -Tyr-|-Leu- and -Tyr-|-Trp bonds also occurs).. In terms of biological role, cleaves peptides in various proteins in a process that requires ATP hydrolysis. Has a chymotrypsin-like activity. Plays a major role in the degradation of misfolded proteins. The protein is ATP-dependent Clp protease proteolytic subunit 1 of Mycolicibacterium paratuberculosis (strain ATCC BAA-968 / K-10) (Mycobacterium paratuberculosis).